Reading from the N-terminus, the 108-residue chain is UPF0060 membrane protein DSY4157 (108 aa).

The next 4 membrane-spanning stretches (helical) occupy residues 6 to 26 (ILFI…WLWL), 31 to 51 (PYWY…IPTL), 60 to 80 (VYAA…WGVD), and 86 to 106 (TYDW…LWAP).

Belongs to the UPF0060 family.

Its subcellular location is the cell membrane. The chain is UPF0060 membrane protein DSY4157 from Desulfitobacterium hafniense (strain Y51).